A 238-amino-acid chain; its full sequence is Purine nucleoside phosphorylase DeoD-type (238 aa).

Position 4 (histidine 4) interacts with a purine D-ribonucleoside. Phosphate contacts are provided by residues glycine 20, arginine 24, arginine 43, and 87-90 (RVGS). Residues 179–181 (EME) and 203–204 (SD) contribute to the a purine D-ribonucleoside site. Aspartate 204 (proton donor) is an active-site residue.

It belongs to the PNP/UDP phosphorylase family. In terms of assembly, homohexamer; trimer of homodimers.

It carries out the reaction a purine D-ribonucleoside + phosphate = a purine nucleobase + alpha-D-ribose 1-phosphate. It catalyses the reaction a purine 2'-deoxy-D-ribonucleoside + phosphate = a purine nucleobase + 2-deoxy-alpha-D-ribose 1-phosphate. Catalyzes the reversible phosphorolytic breakdown of the N-glycosidic bond in the beta-(deoxy)ribonucleoside molecules, with the formation of the corresponding free purine bases and pentose-1-phosphate. This Actinobacillus succinogenes (strain ATCC 55618 / DSM 22257 / CCUG 43843 / 130Z) protein is Purine nucleoside phosphorylase DeoD-type.